The sequence spans 412 residues: Phosphoglycerate kinase (412 aa).

14 residues coordinate (2R)-3-phosphoglycerate: valine 20, aspartate 21, phenylalanine 22, asparagine 23, glutamine 35, arginine 36, serine 59, histidine 60, glycine 62, arginine 63, leucine 118, arginine 119, histidine 166, and arginine 167. Residue glycine 210 participates in ADP binding. Glycine 210 provides a ligand contact to CDP. 2 residues coordinate AMP: alanine 211 and lysine 212. Alanine 211 contacts ATP. Position 211 (alanine 211) interacts with Mg(2+). Mg(2+) contacts are provided by alanine 214 and aspartate 215. A CDP-binding site is contributed by aspartate 215. Lysine 216 is an AMP binding site. Lysine 216 is an ATP binding site. Glycine 234 serves as a coordination point for ADP. Position 234 (glycine 234) interacts with CDP. AMP-binding residues include glycine 235 and glycine 308. ATP is bound by residues glycine 235 and glycine 308. CDP-binding residues include glycine 333 and phenylalanine 338. Phenylalanine 338 contributes to the ADP binding site. Residue glutamate 339 coordinates AMP. ATP-binding residues include glutamate 339, aspartate 370, and threonine 371. Aspartate 370 is a Mg(2+) binding site.

Belongs to the phosphoglycerate kinase family. As to quaternary structure, monomer. Mg(2+) is required as a cofactor.

The protein resides in the cytoplasm. The catalysed reaction is (2R)-3-phosphoglycerate + ATP = (2R)-3-phospho-glyceroyl phosphate + ADP. It participates in carbohydrate degradation; glycolysis; pyruvate from D-glyceraldehyde 3-phosphate: step 2/5. Catalyzes one of the two ATP producing reactions in the glycolytic pathway via the reversible conversion of 1,3-diphosphoglycerate to 3-phosphoglycerate. In addition to its role as a glycolytic enzyme, it seems that PGK-1 acts as a polymerase alpha cofactor protein (primer recognition protein). May play a role in sperm motility. The protein is Phosphoglycerate kinase (PGK) of Aplysia californica (California sea hare).